A 710-amino-acid polypeptide reads, in one-letter code: Choline transporter-like protein 5 (710 aa).

A disordered region spans residues 1–21; the sequence is MARKRKPPSSQGDPRRYDPDF. The Cytoplasmic portion of the chain corresponds to 1-32; the sequence is MARKRKPPSSQGDPRRYDPDFQGPTAKRTCTD. The chain crosses the membrane as a helical span at residues 33–53; it reads VLCCLIFLLFILGYVLLGLLA. Residues 54–236 are Extracellular-facing; sequence WAHGDPRKMA…KLLEDYATSW (183 aa). Residues asparagine 82 and asparagine 184 are each glycosylated (N-linked (GlcNAc...) asparagine). Residues 237-257 traverse the membrane as a helical segment; it reads KWILIGLTVAMALSWTFLILL. At 258–260 the chain is on the cytoplasmic side; it reads RFT. The helical transmembrane segment at 261-281 threads the bilayer; it reads AGFLFWFFIFGVLGIIGYGIW. The Extracellular segment spans residues 282–319; sequence YCFLEYSSIQQRPQSTFWMYGFGIQRRVNMFFHLKETW. A helical transmembrane segment spans residues 320-340; the sequence is FSMMIILSAIEIIIIIVLIFL. Topologically, residues 341–345 are cytoplasmic; sequence RTRIQ. Residues 346-366 traverse the membrane as a helical segment; the sequence is VAIILLQEGSKAISYLPSALI. At 367 to 368 the chain is on the extracellular side; it reads YP. The helical transmembrane segment at 369 to 389 threads the bilayer; the sequence is VLTFILLSICISYWAVTAVFL. Residues 390-454 lie on the Cytoplasmic side of the membrane; that stretch reads ATSGVPIFKV…NYILTFQVYN (65 aa). Residues 455-475 traverse the membrane as a helical segment; the sequence is LFAFLWLINFVIALGQCALAG. The Extracellular portion of the chain corresponds to 476 to 509; that stretch reads AFASYYWAMKKPDDIPPYPLFTAFGRAVRYHTGS. A helical transmembrane segment spans residues 510-530; that stretch reads LAFGSLILASVQMFKVIVEYL. Residues 531–604 are Cytoplasmic-facing; sequence DRRLKKAQNS…KVTVTDEVTY (74 aa). The chain crosses the membrane as a helical span at residues 605 to 625; that stretch reads FVLLLGKVLVSGIVGVLAFLL. The Extracellular segment spans residues 626 to 643; the sequence is FTERLQIIVDGPTTLNYY. Residues 644-664 form a helical membrane-spanning segment; it reads WVPFLTLVFGSYMIAHGFFSV. The Cytoplasmic segment spans residues 665–710; that stretch reads YSMCVETIFICFLEDLERNEGSPSRPYFVTPALMNILLEQGKIKKQ.

The protein belongs to the CTL (choline transporter-like) family.

It localises to the cell membrane. It catalyses the reaction choline(out) + n H(+)(in) = choline(in) + n H(+)(out). Choline/H+ antiporter. This chain is Choline transporter-like protein 5 (Slc44a5), found in Mus musculus (Mouse).